The following is a 146-amino-acid chain: Lysozyme C-2 (146 aa).

Positions 1 to 18 are cleaved as a signal peptide; sequence MKTLLVLALLLLSVSVQA. In terms of domain architecture, C-type lysozyme spans 19–146; it reads KVYDRCEFAR…VSQYIRGCKL (128 aa). 4 cysteine pairs are disulfide-bonded: cysteine 24/cysteine 144, cysteine 48/cysteine 132, cysteine 81/cysteine 97, and cysteine 93/cysteine 111. Residues glutamate 53 and aspartate 69 contribute to the active site.

This sequence belongs to the glycosyl hydrolase 22 family. In terms of assembly, monomer.

The protein localises to the secreted. The catalysed reaction is Hydrolysis of (1-&gt;4)-beta-linkages between N-acetylmuramic acid and N-acetyl-D-glucosamine residues in a peptidoglycan and between N-acetyl-D-glucosamine residues in chitodextrins.. Functionally, lysozymes have primarily a bacteriolytic function; those in tissues and body fluids are associated with the monocyte-macrophage system and enhance the activity of immunoagents. This chain is Lysozyme C-2, found in Sus scrofa (Pig).